The primary structure comprises 166 residues: 16S rRNA aminocarboxypropyltransferase (166 aa).

Residues Thr17, Val62, Ile84, Tyr99, and Ser103 each coordinate S-adenosyl-L-methionine.

The protein belongs to the TDD superfamily. TSR3 family.

Its subcellular location is the cytoplasm. It carries out the reaction an N(1)-methylpseudouridine in rRNA + S-adenosyl-L-methionine = N(1)-methyl-N(3)-[(3S)-3-amino-3-carboxypropyl]pseudouridine in rRNA + S-methyl-5'-thioadenosine + H(+). Aminocarboxypropyltransferase that catalyzes the aminocarboxypropyl transfer on pseudouridine corresponding to position 914 in M.jannaschii 16S rRNA. It constitutes the last step in biosynthesis of the hypermodified N1-methyl-N3-(3-amino-3-carboxypropyl) pseudouridine (m1acp3-Psi). The polypeptide is 16S rRNA aminocarboxypropyltransferase (Saccharolobus solfataricus (strain ATCC 35092 / DSM 1617 / JCM 11322 / P2) (Sulfolobus solfataricus)).